Here is a 539-residue protein sequence, read N- to C-terminus: Lysosomal cobalamin transport escort protein LMBD1 (539 aa).

Topologically, residues 1 to 7 are extracellular; sequence MATGSTE. A helical membrane pass occupies residues 8–28; it reads LLIGWCIFGVLLLAILAFCWV. Residues 29–47 are Cytoplasmic-facing; it reads YVRKYQSHQESEVISTITA. Residues 48 to 68 form a helical membrane-spanning segment; it reads ISSLAIALITSALLPVDIFLV. Topologically, residues 69 to 98 are extracellular; that stretch reads SFMKNHNGTFKDWAESNTTRLQIENTVLIG. Asparagine 75 and asparagine 85 each carry an N-linked (GlcNAc...) asparagine glycan. A helical transmembrane segment spans residues 99–119; the sequence is YYTLYSIILFCVFLWIPFVYF. Residues 120–142 are Cytoplasmic-facing; sequence YYEEKDDTDGSQCSQIANAFKYT. A helical membrane pass occupies residues 143–163; sequence SGFILVCSCLLLIGAFAPLDI. Over 164–186 the chain is Extracellular; sequence HTNKNSTDLDKIKLLFLELGSSN. A glycan (N-linked (GlcNAc...) asparagine) is linked at asparagine 168. Residues 187-207 traverse the membrane as a helical segment; it reads GLAALSFSISSLTLIGMLAAI. Residues 208–303 are Cytoplasmic-facing; that stretch reads TYTAYGMSAL…KCCIVIRPFK (96 aa). The helical transmembrane segment at 304-324 threads the bilayer; it reads IIWGILFILVALLFIVSLFLS. Residues 325 to 362 are Extracellular-facing; the sequence is NLDKALHSAGIDSGFIIFGTNLTNPLNMLLPVLQTVFP. N-linked (GlcNAc...) asparagine glycosylation is present at asparagine 345. A helical membrane pass occupies residues 363-383; it reads LDYIFITIITMYFIFTSMAGI. The Cytoplasmic portion of the chain corresponds to 384–406; the sequence is RNMGIWFFWIRLYKIRRRRTRPQ. The helical transmembrane segment at 407–427 threads the bilayer; that stretch reads ALLFLCMILLLIVLHTSYMIY. Topologically, residues 428–484 are extracellular; sequence SLAPQYVMYGSQKYLWENNSTQETAIGNSSASVLKDCDASAPEDQCTVTRTYLFLHK. N-linked (GlcNAc...) asparagine glycosylation is found at asparagine 445, asparagine 446, and asparagine 455. The chain crosses the membrane as a helical span at residues 485–505; that stretch reads FWFFSSIYYFGNWAFIVVFVI. Residues 506-539 are Cytoplasmic-facing; the sequence is GLIVSCCKGKKSVIEGEVEDDDSDLSDDEEHPYA.

It belongs to the LIMR family. LMBRD1 subfamily.

The protein localises to the endoplasmic reticulum membrane. The protein resides in the lysosome membrane. It localises to the cell membrane. Its function is as follows. Lysosomal membrane chaperone required to export cobalamin (vitamin B12) from the lysosome to the cytosol, allowing its conversion to cofactors. Targets ABCD4 transporter from the endoplasmic reticulum to the lysosome. Then forms a complex with lysosomal ABCD4 and cytoplasmic MMACHC to transport cobalamin across the lysosomal membrane. May play a role in mediating and regulating the internalization of the insulin receptor. The protein is Lysosomal cobalamin transport escort protein LMBD1 (lmbrd1) of Xenopus tropicalis (Western clawed frog).